The following is a 209-amino-acid chain: Orotate phosphoribosyltransferase (209 aa).

5-phospho-alpha-D-ribose 1-diphosphate is bound by residues arginine 96, lysine 100, histidine 102, and 122–130 (EDLISTGGS). An orotate-binding site is contributed by serine 126.

Belongs to the purine/pyrimidine phosphoribosyltransferase family. PyrE subfamily. As to quaternary structure, homodimer. It depends on Mg(2+) as a cofactor.

The catalysed reaction is orotidine 5'-phosphate + diphosphate = orotate + 5-phospho-alpha-D-ribose 1-diphosphate. It functions in the pathway pyrimidine metabolism; UMP biosynthesis via de novo pathway; UMP from orotate: step 1/2. Catalyzes the transfer of a ribosyl phosphate group from 5-phosphoribose 1-diphosphate to orotate, leading to the formation of orotidine monophosphate (OMP). The protein is Orotate phosphoribosyltransferase of Lactococcus lactis subsp. cremoris (strain SK11).